The sequence spans 187 residues: Peptidyl-tRNA hydrolase (187 aa).

Residue Tyr15 coordinates tRNA. His20 (proton acceptor) is an active-site residue. TRNA-binding residues include Phe64, Asn66, and Asn112.

Belongs to the PTH family. Monomer.

The protein resides in the cytoplasm. The catalysed reaction is an N-acyl-L-alpha-aminoacyl-tRNA + H2O = an N-acyl-L-amino acid + a tRNA + H(+). Its function is as follows. Hydrolyzes ribosome-free peptidyl-tRNAs (with 1 or more amino acids incorporated), which drop off the ribosome during protein synthesis, or as a result of ribosome stalling. Functionally, catalyzes the release of premature peptidyl moieties from peptidyl-tRNA molecules trapped in stalled 50S ribosomal subunits, and thus maintains levels of free tRNAs and 50S ribosomes. In Bacteroides fragilis (strain ATCC 25285 / DSM 2151 / CCUG 4856 / JCM 11019 / LMG 10263 / NCTC 9343 / Onslow / VPI 2553 / EN-2), this protein is Peptidyl-tRNA hydrolase.